Consider the following 123-residue polypeptide: Protein Wnt-7a (123 aa).

The O-palmitoleoyl serine; by PORCN moiety is linked to residue Ser-1. Residues 33–61 (VEPVRTHRNKRPVFLKIKKPLSYRKPMVT) are disordered linker. A disulfide bridge connects residues Cys-89 and Cys-104. 2 N-linked (GlcNAc...) asparagine glycosylation sites follow: Asn-90 and Asn-96.

Belongs to the Wnt family. Forms a soluble 1:1 complex with AFM; this prevents oligomerization and is required for prolonged biological activity. The complex with AFM may represent the physiological form in body fluids. Interacts with FZD5. Interacts with PORCN. Palmitoleoylation is required for efficient binding to frizzled receptors. Depalmitoleoylation leads to Wnt signaling pathway inhibition.

The protein localises to the secreted. Its subcellular location is the extracellular space. It is found in the extracellular matrix. Its function is as follows. Ligand for members of the frizzled family of seven transmembrane receptors that functions in the canonical Wnt/beta-catenin signaling pathway. Plays an important role in embryonic development, including dorsal versus ventral patterning during limb development, skeleton development and urogenital tract development. Required for central nervous system (CNS) angiogenesis and blood-brain barrier regulation. The sequence is that of Protein Wnt-7a (WNT-7A) from Alopias vulpinus (Common thresher shark).